Here is a 49-residue protein sequence, read N- to C-terminus: Multidrug efflux pump accessory protein AcrZ (49 aa).

Residues 1 to 7 (MLELLKS) lie on the Periplasmic side of the membrane. A helical membrane pass occupies residues 8-28 (LVFAVIMVPVVMAIILGLIYG). At 29–49 (LGEVFNIFSGVGKKDQPGQNH) the chain is on the cytoplasmic side.

This sequence belongs to the AcrZ family. Part of the AcrA-AcrB-AcrZ-TolC efflux pump, interacts directly with AcrB.

The protein localises to the cell inner membrane. AcrA-AcrB-AcrZ-TolC is a drug efflux protein complex with a broad substrate specificity. This protein binds to AcrB and is required for efflux of some but not all substrates, suggesting it may influence the specificity of drug export. The sequence is that of Multidrug efflux pump accessory protein AcrZ from Escherichia coli O157:H7.